A 195-amino-acid polypeptide reads, in one-letter code: Auxin-responsive protein IAA14 (195 aa).

2 disordered regions span residues 1 to 61 (MAAE…SPAS) and 85 to 107 (STAA…NKGG). An EAR-like (transcriptional repression) motif is present at residues 10-14 (LRLGL). Residues 108–191 (GLYVKVSMDG…SCKKLRIMRG (84 aa)) enclose the PB1 domain.

It belongs to the Aux/IAA family. In terms of assembly, homodimers and heterodimers. In terms of tissue distribution, highly expressed in flowers. Expressed in etiolated seedlings.

Its subcellular location is the nucleus. Aux/IAA proteins are short-lived transcriptional factors that function as repressors of early auxin response genes at low auxin concentrations. This Oryza sativa subsp. japonica (Rice) protein is Auxin-responsive protein IAA14 (IAA14).